Consider the following 330-residue polypeptide: MTHSVTLRGPSPWGFRLVGGRDFSAPLTISRVHAGSKAALAALCPGDLIQAINGESTELMTHLEAQNRIKGCHDHLTLSVSRPENKNWPSAPDDKAQAHRIHIDPESQDCSPATSRRSSVSGISLEDNRSGLGSPYGQPPRLPVPHNGSSNEATLPAQMSALHVSPPTSADTARVLPRNRDCRVDLGSEVYRMLREPAEPTASEPKQSGSFRYLQGMLEAGEGGDRPGSGGPRNLKPAASKLGAPLSGLQGLPECTRCGHGIVGTIVKARDKLYHPECFMCSDCGLNLKQRGYFFLDERLYCENHAKARVKPPEGYDVVAVYPNAKVELV.

One can recognise a PDZ domain in the interval Met-1 to Glu-84. 2 disordered regions span residues Asp-104–Ala-153 and Glu-219–Leu-242. Phosphoserine occurs at positions 107, 111, 115, 118, 119, 124, and 134. Positions Gln-108–Gly-122 are enriched in polar residues. The LIM zinc-binding domain occupies Cys-255–His-305.

Homodimer. Interacts (via C-terminus only or via combined C-terminus and LIM domain, but not LIM domain only) with PTPN13 (via the second or fourth PDZ domains). Found in a complex with PTPN13 and TRIP6. Interacts (via PDZ domain) with ACTN1 and ACTN2 (via C-terminal SDL residues). Interacts (via PDZ domain) with TRIP6 (via the second LIM domain or via the third LIM domain plus C-terminus). Interacts (via LIM domain) with GRIA1 (via C-terminus); this interaction as well as the interaction with alpha-actinin is required for their colocalization in early endosomes. Interacts with PDLIM1. Forms (via LIM domain) a heterodimer with PDLIM3. Interacts directly with SRC (via kinase domain and to a lesser extent the SH2 domain). Post-translationally, phosphorylated on tyrosine residue(s). Can be dephosphorylated by PTPN13. Expressed in several non-muscle tissues including lung, brain, ovary and uterus, and especially in epithelial cells at 14 dpc. In the uterus, high expression in the glandular epithelium, but absent in the simple columnar epithelium lining the uterus cavity.

It localises to the cytoplasm. The protein resides in the cytoskeleton. The protein localises to the cell projection. Its subcellular location is the dendritic spine. It is found in the early endosome membrane. It localises to the recycling endosome membrane. The protein resides in the nucleus. The protein localises to the perinuclear region. Its subcellular location is the lamellipodium. It is found in the synapse. It localises to the synaptosome. In terms of biological role, suppresses SRC activation by recognizing and binding to active SRC and facilitating PTPN13-mediated dephosphorylation of SRC 'Tyr-419' leading to its inactivation. Inactivated SRC dissociates from this protein allowing the initiation of a new SRC inactivation cycle. Involved in reorganization of the actin cytoskeleton. In nonmuscle cells, binds to ACTN1 (alpha-actinin-1), increases the affinity of ACTN1 to F-actin (filamentous actin), and promotes formation of actin stress fibers. Involved in regulation of the synaptic AMPA receptor transport in dendritic spines of hippocampal pyramidal neurons directing the receptors toward an insertion at the postsynaptic membrane. Links endosomal surface-internalized GRIA1-containing AMPA receptors to the alpha-actinin/actin cytoskeleton. Increases AMPA receptor-mediated excitatory postsynaptic currents in neurons. The chain is PDZ and LIM domain protein 4 (Pdlim4) from Mus musculus (Mouse).